The primary structure comprises 237 residues: Sugar fermentation stimulation protein homolog (237 aa).

This sequence belongs to the SfsA family.

The polypeptide is Sugar fermentation stimulation protein homolog (Actinobacillus pleuropneumoniae serotype 3 (strain JL03)).